The following is a 590-amino-acid chain: Leucine-rich repeat transmembrane neuronal protein 4 (590 aa).

The N-terminal stretch at M1 to A30 is a signal peptide. Residues Q31–G61 enclose the LRRNT domain. At Q31–K424 the chain is on the extracellular side. N-linked (GlcNAc...) asparagine glycosylation is present at N58. LRR repeat units follow at residues G62–G83, Q86–G107, R110–P131, N134–G155, K158–D179, N182–G203, K206–P226, N230–T251, S254–C275, and N278–A299. N-linked (GlcNAc...) asparagine glycosylation occurs at N126. N291 carries an N-linked (GlcNAc...) asparagine glycan. Residues N311–D362 enclose the LRRCT domain. A helical membrane pass occupies residues I425–V445. The Cytoplasmic portion of the chain corresponds to S446 to N590.

The protein belongs to the LRRTM family. In terms of assembly, peripherally associated with AMPAR complex. AMPAR complex consists of an inner core made of 4 pore-forming GluA/GRIA proteins (GRIA1, GRIA2, GRIA3 and GRIA4) and 4 major auxiliary subunits arranged in a twofold symmetry. One of the two pairs of distinct binding sites is occupied either by CNIH2, CNIH3 or CACNG2, CACNG3. The other harbors CACNG2, CACNG3, CACNG4, CACNG8 or GSG1L. This inner core of AMPAR complex is complemented by outer core constituents binding directly to the GluA/GRIA proteins at sites distinct from the interaction sites of the inner core constituents. Outer core constituents include at least PRRT1, PRRT2, CKAMP44/SHISA9, FRRS1L and NRN1. The proteins of the inner and outer core serve as a platform for other, more peripherally associated AMPAR constituents, including LRRTM4. Alone or in combination, these auxiliary subunits control the gating and pharmacology of the AMPAR complex and profoundly impact their biogenesis and protein processing. Predominantly in the brain (at protein level). Also expressed in the cerebellum and other tissues.

Its subcellular location is the cell membrane. It is found in the postsynaptic cell membrane. Its function is as follows. May play a role in the development and maintenance of the vertebrate nervous system. Exhibits strong synaptogenic activity, restricted to excitatory presynaptic differentiation. This is Leucine-rich repeat transmembrane neuronal protein 4 (Lrrtm4) from Mus musculus (Mouse).